The sequence spans 630 residues: Biosynthetic arginine decarboxylase (630 aa).

K99 is modified (N6-(pyridoxal phosphate)lysine). Position 281–291 (281–291 (VDIGGGLGVDY)) interacts with substrate.

It belongs to the Orn/Lys/Arg decarboxylase class-II family. SpeA subfamily. It depends on Mg(2+) as a cofactor. Pyridoxal 5'-phosphate is required as a cofactor.

It carries out the reaction L-arginine + H(+) = agmatine + CO2. Catalyzes the biosynthesis of agmatine from arginine. This is Biosynthetic arginine decarboxylase from Bacteroides thetaiotaomicron (strain ATCC 29148 / DSM 2079 / JCM 5827 / CCUG 10774 / NCTC 10582 / VPI-5482 / E50).